Reading from the N-terminus, the 273-residue chain is Zinc finger protein 80 (273 aa).

2 consecutive C2H2-type zinc fingers follow at residues 49-71 (YKCKECGKVFNKNSLLVRHHQIH) and 77-99 (YECQECGKAFHEKVDFVRHMRIH). The C2H2-type 3; atypical zinc finger occupies 105–127 (CKCVECGKVFNRRSHLLCYRQIH). C2H2-type zinc fingers lie at residues 133–155 (YECSECGKTFSYHSVFIQHRMTH), 161–183 (FGCKECGKTFYYNSSLTRHMKIH), 189–211 (YKCGECGKTFTYHSVFFRHSMTH), and 217–239 (YECKECGKGFYYSYSLTRHTRSH).

It belongs to the krueppel C2H2-type zinc-finger protein family.

It localises to the nucleus. May be involved in transcriptional regulation. This chain is Zinc finger protein 80 (ZNF80), found in Gorilla gorilla gorilla (Western lowland gorilla).